Consider the following 232-residue polypeptide: 2-C-methyl-D-erythritol 4-phosphate cytidylyltransferase (232 aa).

Belongs to the IspD/TarI cytidylyltransferase family. IspD subfamily.

The enzyme catalyses 2-C-methyl-D-erythritol 4-phosphate + CTP + H(+) = 4-CDP-2-C-methyl-D-erythritol + diphosphate. The protein operates within isoprenoid biosynthesis; isopentenyl diphosphate biosynthesis via DXP pathway; isopentenyl diphosphate from 1-deoxy-D-xylulose 5-phosphate: step 2/6. Functionally, catalyzes the formation of 4-diphosphocytidyl-2-C-methyl-D-erythritol from CTP and 2-C-methyl-D-erythritol 4-phosphate (MEP). The protein is 2-C-methyl-D-erythritol 4-phosphate cytidylyltransferase of Rhodococcus erythropolis (strain PR4 / NBRC 100887).